Consider the following 474-residue polypeptide: Lactococcin A secretion protein LcnD (474 aa).

Residues 1–21 are Cytoplasmic-facing; that stretch reads MFDKKLLESSELYDKRYRNFS. A helical membrane pass occupies residues 22 to 44; that stretch reads TLIILPLFILLVGGVIFTFFAHK. The Extracellular portion of the chain corresponds to 45–474; it reads ELTVISTGSI…LDKIMGRGNQ (430 aa).

Belongs to the membrane fusion protein (MFP) (TC 8.A.1) family.

The protein localises to the cell membrane. Functionally, involved in the secretion of lactococcin A. The sequence is that of Lactococcin A secretion protein LcnD (lcnD) from Lactococcus lactis subsp. cremoris (Streptococcus cremoris).